Here is a 342-residue protein sequence, read N- to C-terminus: Anthranilate phosphoribosyltransferase (342 aa).

Residues Gly84, 87–88 (GD), Thr92, 94–97 (NITT), 112–120 (KHGNRSVSS), and Ser124 contribute to the 5-phospho-alpha-D-ribose 1-diphosphate site. Gly84 lines the anthranilate pocket. Mg(2+) is bound at residue Thr96. Position 115 (Asn115) interacts with anthranilate. Arg170 lines the anthranilate pocket. Mg(2+) contacts are provided by Asp228 and Glu229.

It belongs to the anthranilate phosphoribosyltransferase family. As to quaternary structure, homodimer. The cofactor is Mg(2+).

The enzyme catalyses N-(5-phospho-beta-D-ribosyl)anthranilate + diphosphate = 5-phospho-alpha-D-ribose 1-diphosphate + anthranilate. Its pathway is amino-acid biosynthesis; L-tryptophan biosynthesis; L-tryptophan from chorismate: step 2/5. Catalyzes the transfer of the phosphoribosyl group of 5-phosphorylribose-1-pyrophosphate (PRPP) to anthranilate to yield N-(5'-phosphoribosyl)-anthranilate (PRA). This is Anthranilate phosphoribosyltransferase from Corynebacterium efficiens (strain DSM 44549 / YS-314 / AJ 12310 / JCM 11189 / NBRC 100395).